The following is an 89-amino-acid chain: MSEQGDLNQAIAEEGGTEQETATPENGIVKSESLDEEEKLELQRRLEAQNQERRKSKSGAGKGKLTRSLAVCEESSARPGGESLQDQTL.

The segment at 1-89 (MSEQGDLNQA…GGESLQDQTL (89 aa)) is disordered. Position 2 is an N-acetylserine (Ser2). Positions 9 to 25 (QAIAEEGGTEQETATPE) are enriched in low complexity. At Ser33 the chain carries Phosphoserine. The span at 40–53 (LELQRRLEAQNQER) shows a compositional bias: basic and acidic residues. At Ser56 the chain carries Phosphoserine.

In terms of assembly, interacts with CALM1. Phosphorylation at Ser-56 favors interaction with CALM1.

The protein resides in the cytoplasm. May act as a competitive inhibitor of calmodulin-dependent enzymes such as calcineurin in neurons. This Pongo abelii (Sumatran orangutan) protein is cAMP-regulated phosphoprotein 21 (ARPP21).